The following is a 145-amino-acid chain: Large ribosomal subunit protein bL9 (145 aa).

Belongs to the bacterial ribosomal protein bL9 family.

Binds to the 23S rRNA. The polypeptide is Large ribosomal subunit protein bL9 (Ureaplasma parvum serovar 3 (strain ATCC 700970)).